A 306-amino-acid polypeptide reads, in one-letter code: D-aminoacyl-tRNA deacylase (306 aa).

This sequence belongs to the DtdA deacylase family. In terms of assembly, monomer. Zn(2+) serves as cofactor.

The catalysed reaction is a D-aminoacyl-tRNA + H2O = a tRNA + a D-alpha-amino acid + H(+). It catalyses the reaction glycyl-tRNA(Ala) + H2O = tRNA(Ala) + glycine + H(+). Functionally, D-aminoacyl-tRNA deacylase with broad substrate specificity. By recycling D-aminoacyl-tRNA to D-amino acids and free tRNA molecules, this enzyme counteracts the toxicity associated with the formation of D-aminoacyl-tRNA entities in vivo. The chain is D-aminoacyl-tRNA deacylase from Methanosarcina barkeri (strain Fusaro / DSM 804).